We begin with the raw amino-acid sequence, 258 residues long: D-aminoacyl-tRNA deacylase (258 aa).

It belongs to the DtdA deacylase family. As to quaternary structure, monomer. Zn(2+) is required as a cofactor.

The catalysed reaction is a D-aminoacyl-tRNA + H2O = a tRNA + a D-alpha-amino acid + H(+). It catalyses the reaction glycyl-tRNA(Ala) + H2O = tRNA(Ala) + glycine + H(+). Its function is as follows. D-aminoacyl-tRNA deacylase with broad substrate specificity. By recycling D-aminoacyl-tRNA to D-amino acids and free tRNA molecules, this enzyme counteracts the toxicity associated with the formation of D-aminoacyl-tRNA entities in vivo. The chain is D-aminoacyl-tRNA deacylase from Cenarchaeum symbiosum (strain A).